A 366-amino-acid chain; its full sequence is Trans-enoyl reductase caaB (366 aa).

Residues 19-363 form the Enoyl reductase (ER) domain; that stretch reads GAGQLSIYHD…RQTVSGHKLV (345 aa). Y219 is a binding site for NADP(+).

It belongs to the zinc-containing alcohol dehydrogenase family. In terms of assembly, monomer.

It functions in the pathway secondary metabolite biosynthesis. Functionally, trans-enoyl reductase; part of the gene cluster that produces the acyltetronic acid derivatives carlosic acid, agglomerin F and carlosic acid methyl ether. The PKS domains of caaA condenses two malonyl-CoAs into an acetyl starter unit, and form 1,3-diketohexanyl-ACP with the help of the trans-enoyl reductase caaB. Next, the C domain of caaA forms the ester bond between the acyl chain and L-malic acid (derived from the TCA cycle) and accepted by the A domain instead of an amino acid. Finally, the terminal reductase/Dieckmann cyclization (R/DKC) domain cyclizes the intermediate and releases the product as carlosic acid. Decarboxylation of carlosic acid followed by formation of the exocyclic double bond is likely to be catalyzed by the cytochrome P450 monooxygenase caaC. Thus, decarboxylation and oxidation would be coupled (performed by one enzyme) through concomitant abstraction of the hydrogen at C-4. Finally, sequential oxidations of the terminal C-10 methyl group to form carboxylic acid would be catalyzed by the 2-oxoglutarate-dependent dioxygenase caaD, which is required for the biosynthesis of agglomerin F. The polypeptide is Trans-enoyl reductase caaB (Aspergillus niger (strain ATCC MYA-4892 / CBS 513.88 / FGSC A1513)).